Here is a 324-residue protein sequence, read N- to C-terminus: Homoserine kinase (324 aa).

87–97 (PVARGMGSSAA) serves as a coordination point for ATP.

The protein belongs to the GHMP kinase family. Homoserine kinase subfamily.

It is found in the cytoplasm. The enzyme catalyses L-homoserine + ATP = O-phospho-L-homoserine + ADP + H(+). It functions in the pathway amino-acid biosynthesis; L-threonine biosynthesis; L-threonine from L-aspartate: step 4/5. Catalyzes the ATP-dependent phosphorylation of L-homoserine to L-homoserine phosphate. In Symbiobacterium thermophilum (strain DSM 24528 / JCM 14929 / IAM 14863 / T), this protein is Homoserine kinase.